We begin with the raw amino-acid sequence, 265 residues long: Shikimate dehydrogenase (NADP(+)) (265 aa).

Residues 14–16 (SLS) and Thr61 contribute to the shikimate site. Lys65 serves as the catalytic Proton acceptor. Positions 85 and 100 each coordinate shikimate. Residues 123–127 (GAGGA), 146–151 (NRTESK), and Ala209 contribute to the NADP(+) site. Shikimate is bound at residue Tyr211. Residue Gly232 participates in NADP(+) binding.

It belongs to the shikimate dehydrogenase family. As to quaternary structure, homodimer.

It catalyses the reaction shikimate + NADP(+) = 3-dehydroshikimate + NADPH + H(+). It participates in metabolic intermediate biosynthesis; chorismate biosynthesis; chorismate from D-erythrose 4-phosphate and phosphoenolpyruvate: step 4/7. Its function is as follows. Involved in the biosynthesis of the chorismate, which leads to the biosynthesis of aromatic amino acids. Catalyzes the reversible NADPH linked reduction of 3-dehydroshikimate (DHSA) to yield shikimate (SA). The protein is Shikimate dehydrogenase (NADP(+)) of Haloarcula marismortui (strain ATCC 43049 / DSM 3752 / JCM 8966 / VKM B-1809) (Halobacterium marismortui).